Reading from the N-terminus, the 93-residue chain is Putative pterin-4-alpha-carbinolamine dehydratase (93 aa).

This sequence belongs to the pterin-4-alpha-carbinolamine dehydratase family.

It catalyses the reaction (4aS,6R)-4a-hydroxy-L-erythro-5,6,7,8-tetrahydrobiopterin = (6R)-L-erythro-6,7-dihydrobiopterin + H2O. This Thermomicrobium roseum (strain ATCC 27502 / DSM 5159 / P-2) protein is Putative pterin-4-alpha-carbinolamine dehydratase.